The following is a 374-amino-acid chain: 5-methylthioribulose-1-phosphate isomerase (374 aa).

The protein belongs to the RuBisCO large chain family. Type IV subfamily.

It carries out the reaction 5-(methylsulfanyl)-D-ribulose 1-phosphate = S-methyl-1-thio-D-xylulose 5-phosphate. It catalyses the reaction 5-(methylsulfanyl)-D-ribulose 1-phosphate = 1-(methylsulfanyl)ribulose 5-phosphate. It functions in the pathway amino-acid biosynthesis; L-methionine biosynthesis via salvage pathway. It participates in metabolic intermediate biosynthesis; 1-deoxy-D-xylulose 5-phosphate biosynthesis. Functionally, catalyzes the conversion of 5-methylthio-D-ribulose 1-phosphate (MTRu-1P) to a 3:1 mixture of 1-methylthioxylulose 5-phosphate (MTXu-5P) and 1-methylthioribulose 5-phosphate (MTRu-5P). Involved in the MTA-isoprenoid shunt of the methionine salvage pathway. This Rhodospirillum rubrum (strain ATCC 11170 / ATH 1.1.1 / DSM 467 / LMG 4362 / NCIMB 8255 / S1) protein is 5-methylthioribulose-1-phosphate isomerase.